Here is a 959-residue protein sequence, read N- to C-terminus: MVAAPCARRLARRSHSALLAALTVLLLQTLVVWNFSSLDSGAGERRGGAAVGGGEQPPPAPAPRRERRDLPAEPAAARGGGGGGGGGGGGRGPQARARGGGPGEPRGQQPASRGALPARALDPHPSPLITLETQDGYFSHRPKEKVRTDSNNENSVPKDFENVDNSNFAPRTQKQKHQPELAKKPPSRQKELLKRKLEQQEKGKGHTFPGKGPGEVLPPGDRAAANSSHGKDVSRPPHARKTGGSSPETKYDQPPKCDISGKEAISALSRAKSKHCRQEIGETYCRHKLGLLMPEKVTRFCPLEGKANKNVQWDEDSVEYMPANPVRIAFVLVVHGRASRQLQRMFKAIYHKDHFYYIHVDKRSNYLHRQVLQVSRQYSNVRVTPWRMATIWGGASLLSTYLQSMRDLLEMTDWPWDFFINLSAADYPIRTNDQLVAFLSRYRDMNFLKSHGRDNARFIRKQGLDRLFLECDAHMWRLGDRRIPEGIAVDGGSDWFLLNRRFVEYVTFSTDDLVTKMKQFYSYTLLPAESFFHTVLENSPHCDTMVDNNLRITNWNRKLGCKCQYKHIVDWCGCSPNDFKPQDFHRFQQTARPTFFARKFEAVVNQEIIGQLDYYLYGNYPAGTPGLRSYWENVYDEPDGIHSLSDVTLTLYHSFARLGLRRAETSLHTDGENSCRYYPMGHPASVHLYFLADRFQGFLIKHHATNLAVSKLETLETWVMPKKVFKIASPPSDFGRLQFSEVGTDWDAKERLFRNFGGLLGPMDEPVGMQKWGKGPNVTVTVIWVDPVNVIAATYDILIESTAEFTHYKPPLNLPLRPGVWTVKILHHWVPVAETKFLVAPLTFSNRQPIKPEEALKLHNGPLRNAYMEQSFQSLNPVLSLPINPAQVEQARRNAASTGTALEGWLDSLVGGMWTAMDICATGPTACPVMQTCSQTAWSSFSPDPKSELGAVKPDGRLR.

Residues 1-17 (MVAAPCARRLARRSHSA) are Cytoplasmic-facing. The chain crosses the membrane as a helical; Signal-anchor for type II membrane protein span at residues 18-38 (LLAALTVLLLQTLVVWNFSSL). Over 39–959 (DSGAGERRGG…GAVKPDGRLR (921 aa)) the chain is Lumenal. Residues 42 to 259 (AGERRGGAAV…KYDQPPKCDI (218 aa)) form a disordered region. The segment covering 78-104 (RGGGGGGGGGGGGRGPQARARGGGPGE) has biased composition (gly residues). Residues 145 to 161 (KVRTDSNNENSVPKDFE) are compositionally biased toward basic and acidic residues. Residues 163–172 (VDNSNFAPRT) are compositionally biased toward polar residues. A compositionally biased stretch (basic and acidic residues) spans 177 to 204 (HQPELAKKPPSRQKELLKRKLEQQEKGK). Asn-226 carries an N-linked (GlcNAc...) asparagine glycan. A compositionally biased stretch (basic and acidic residues) spans 249–259 (TKYDQPPKCDI). 4 disulfide bridges follow: Cys-257–Cys-285, Cys-301–Cys-542, Cys-561–Cys-574, and Cys-563–Cys-572. UDP-alpha-D-xylose-binding positions include Val-333, Asp-361, and 390 to 392 (TIW). N-linked (GlcNAc...) asparagine glycosylation is present at Asn-421. UDP-alpha-D-xylose is bound at residue 494 to 495 (DW). UDP-alpha-D-xylose contacts are provided by residues Ser-575 and 598–599 (RK). Cystine bridges form between Cys-675/Cys-927 and Cys-920/Cys-933. Asn-777 carries an N-linked (GlcNAc...) asparagine glycan. The disordered stretch occupies residues 940-959 (SFSPDPKSELGAVKPDGRLR).

This sequence belongs to the glycosyltransferase 14 family. XylT subfamily. As to quaternary structure, monomer. A divalent metal cation serves as cofactor. Post-translationally, contains 7 disulfide bonds. N-glycosylated. Widely expressed. Expressed at higher level in placenta, kidney and pancreas. Weakly expressed in skeletal muscle.

The protein localises to the golgi apparatus membrane. It is found in the secreted. It catalyses the reaction UDP-alpha-D-xylose + L-seryl-[protein] = 3-O-(beta-D-xylosyl)-L-seryl-[protein] + UDP + H(+). It functions in the pathway glycan metabolism; chondroitin sulfate biosynthesis. The protein operates within glycan metabolism; heparan sulfate biosynthesis. Its function is as follows. Catalyzes the first step in the biosynthesis of chondroitin sulfate and dermatan sulfate proteoglycans, such as DCN. Transfers D-xylose from UDP-D-xylose to specific serine residues of the core protein. Required for normal embryonic and postnatal skeleton development, especially of the long bones. Required for normal maturation of chondrocytes during bone development, and normal onset of ossification. This Homo sapiens (Human) protein is Xylosyltransferase 1 (XYLT1).